Reading from the N-terminus, the 300-residue chain is Small ribosomal subunit protein uS2 (300 aa).

Residues 269 to 300 (WEADGADWAASSAAAPAESWAAEAQGAEGAKW) are disordered.

Belongs to the universal ribosomal protein uS2 family. As to quaternary structure, component of the small ribosomal subunit. Mature ribosomes consist of a small (40S) and a large (60S) subunit. The 40S subunit contains about 33 different proteins and 1 molecule of RNA (18S). The 60S subunit contains about 49 different proteins and 3 molecules of RNA (25S, 5.8S and 5S). Interacts with rps21.

It localises to the cytoplasm. Its function is as follows. Required for the assembly and/or stability of the 40S ribosomal subunit. Required for the processing of the 20S rRNA-precursor to mature 18S rRNA in a late step of the maturation of 40S ribosomal subunits. This chain is Small ribosomal subunit protein uS2 (rps0), found in Aspergillus terreus (strain NIH 2624 / FGSC A1156).